The primary structure comprises 75 residues: ATP synthase subunit c (75 aa).

The next 2 membrane-spanning stretches (helical) occupy residues 9–29 (IGAGLAAIALAGAGVGIGIIF) and 54–74 (FALAEATGLFGLVVALIILFA).

This sequence belongs to the ATPase C chain family. In terms of assembly, F-type ATPases have 2 components, F(1) - the catalytic core - and F(0) - the membrane proton channel. F(1) has five subunits: alpha(3), beta(3), gamma(1), delta(1), epsilon(1). F(0) has three main subunits: a(1), b(2) and c(10-14). The alpha and beta chains form an alternating ring which encloses part of the gamma chain. F(1) is attached to F(0) by a central stalk formed by the gamma and epsilon chains, while a peripheral stalk is formed by the delta and b chains.

Its subcellular location is the cell inner membrane. F(1)F(0) ATP synthase produces ATP from ADP in the presence of a proton or sodium gradient. F-type ATPases consist of two structural domains, F(1) containing the extramembraneous catalytic core and F(0) containing the membrane proton channel, linked together by a central stalk and a peripheral stalk. During catalysis, ATP synthesis in the catalytic domain of F(1) is coupled via a rotary mechanism of the central stalk subunits to proton translocation. Its function is as follows. Key component of the F(0) channel; it plays a direct role in translocation across the membrane. A homomeric c-ring of between 10-14 subunits forms the central stalk rotor element with the F(1) delta and epsilon subunits. This chain is ATP synthase subunit c, found in Pelagibacter ubique (strain HTCC1062).